A 193-amino-acid chain; its full sequence is Recombination protein RecR (193 aa).

The C4-type zinc finger occupies 61–76 (CASCNALSESEICEIC). One can recognise a Toprim domain in the interval 84–170 (SQLCMVLHPR…TFTKIAQGVP (87 aa)).

This sequence belongs to the RecR family.

In terms of biological role, may play a role in DNA repair. It seems to be involved in an RecBC-independent recombinational process of DNA repair. It may act with RecF and RecO. This is Recombination protein RecR from Helicobacter pylori (strain Shi470).